A 423-amino-acid polypeptide reads, in one-letter code: Keratin, type I cytoskeletal 18 (423 aa).

S2 is subject to N-acetylserine. Residues 2-71 (SFTTRSTTFS…GLAGMGGVQT (70 aa)) form a head region. S7, S11, S16, and S19 each carry phosphoserine. S31 and S32 each carry phosphoserine; alternate. O-linked (GlcNAc) serine; alternate glycosylation is found at S31 and S32. Position 35 is a phosphoserine (S35). Residue Y37 is modified to Phosphotyrosine. S43 is subject to Phosphoserine. R46 bears the Omega-N-methylarginine mark. S50 carries the post-translational modification Phosphoserine; alternate. An O-linked (GlcNAc) serine; alternate glycan is attached at S50. A Phosphoserine; by MAPKAPK2 and MAPKAPK3 modification is found at S52. Phosphoserine occurs at positions 57 and 60. Residues 62 to 366 (GLAGMGGVQT…EALLNIKVKL (305 aa)) are necessary for interaction with PNN. The interval 69–121 (VQTEKETMQDLNDRLASYLDKVKNLETENRRLESKIREYLEKRGPQGVRDWGH) is interaction with TRADD. Residues 72–107 (EKETMQDLNDRLASYLDKVKNLETENRRLESKIREY) form a coil 1A region. An IF rod domain is found at 72–384 (EKETMQDLND…RLLEDGDDFS (313 aa)). K73 participates in a covalent cross-link: Glycyl lysine isopeptide (Lys-Gly) (interchain with G-Cter in SUMO2). Position 85 is a phosphoserine (S85). A linker 1 region spans residues 108–125 (LEKRGPQGVRDWGHYFKT). K124 carries the post-translational modification N6-acetyllysine. The tract at residues 126-217 (IEDLRAQIFA…KNHEEEVQGL (92 aa)) is coil 1B. 2 positions are modified to phosphoserine: S137 and S170. The linker 12 stretch occupies residues 218–241 (EAQIASSGLTVEVDAPKSQDLSKI). An interaction with DNAJB6 region spans residues 236-384 (QDLSKIMADI…RLLEDGDDFS (149 aa)). K240 is covalently cross-linked (Glycyl lysine isopeptide (Lys-Gly) (interchain with G-Cter in SUMO2)). The segment at 242-380 (MADIRAQYEQ…ATYRRLLEDG (139 aa)) is coil 2. T295 is subject to Phosphothreonine. Glycyl lysine isopeptide (Lys-Gly) (interchain with G-Cter in SUMO2) cross-links involve residues K363 and K365. Positions 381 to 423 (DDFSLNDALDSSNSMQTVQRTTTRKVVDGKVVSETNDTRVLRH) are tail. 4 positions are modified to phosphoserine: S384, S391, S392, and S394. At T397 the chain carries Phosphothreonine. A Glycyl lysine isopeptide (Lys-Gly) (interchain with G-Cter in SUMO2) cross-link involves residue K410.

It belongs to the intermediate filament family. Heterotetramer of two type I and two type II keratins. KRT18 associates with KRT8. Interacts with PNN and mutated CFTR. Interacts with YWHAE, YWHAH and YWHAZ only when phosphorylated. Interacts with DNAJB6, TCHP and TRADD. Interacts with the thrombin-antithrombin complex. Interacts with FAM83H. Interacts with EPPK1. Interacts with PKP1 and PKP2. Post-translationally, phosphorylation increases by IL-6. In terms of processing, proteolytically cleaved by caspases during epithelial cell apoptosis. Cleavage occurs at Asp-231 by either caspase-3, caspase-6 or caspase-7. Dephosphorylated by ethanol. Post-translationally, O-GlcNAcylation increases solubility, and decreases stability by inducing proteasomal degradation. Expressed on the plasma membrane of hepatocytes and in the narrow apical portions of supporting cells in the vomeronasal sensory epithelium. Detected in the type III alveolar cells of the lung, in the proliferative crypt epithelium of the small intestine and in the older intragemmal cells of the tongue.

Its subcellular location is the nucleus matrix. It is found in the cytoplasm. The protein localises to the perinuclear region. It localises to the nucleus. The protein resides in the nucleolus. Functionally, when phosphorylated, plays a role in filament reorganization. Involved in the delivery of mutated CFTR to the plasma membrane. Together with KRT8, is involved in interleukin-6 (IL-6)-mediated barrier protection. Involved in the uptake of thrombin-antithrombin complexes by hepatic cells. The polypeptide is Keratin, type I cytoskeletal 18 (Rattus norvegicus (Rat)).